Consider the following 227-residue polypeptide: 2,3-bisphosphoglycerate-dependent phosphoglycerate mutase (227 aa).

Residues arginine 7–asparagine 14, threonine 20–glycine 21, arginine 59, glutamate 86–tyrosine 89, lysine 97, arginine 113–arginine 114, and glycine 182–asparagine 183 each bind substrate. The active-site Tele-phosphohistidine intermediate is histidine 8. Glutamate 86 serves as the catalytic Proton donor/acceptor.

The protein belongs to the phosphoglycerate mutase family. BPG-dependent PGAM subfamily. As to quaternary structure, homodimer.

The catalysed reaction is (2R)-2-phosphoglycerate = (2R)-3-phosphoglycerate. It functions in the pathway carbohydrate degradation; glycolysis; pyruvate from D-glyceraldehyde 3-phosphate: step 3/5. In terms of biological role, catalyzes the interconversion of 2-phosphoglycerate and 3-phosphoglycerate. The chain is 2,3-bisphosphoglycerate-dependent phosphoglycerate mutase from Glaesserella parasuis serovar 5 (strain SH0165) (Haemophilus parasuis).